The chain runs to 231 residues: ATP-dependent dethiobiotin synthetase BioD 2 (231 aa).

13-18 contacts ATP; it reads SVGKTV. T17 contacts Mg(2+). K38 is an active-site residue. ATP-binding positions include D55, 112 to 115, 172 to 173, 201 to 203, and Q208; these read EGTG, NR, and PYL. Mg(2+) contacts are provided by D55 and E112.

This sequence belongs to the dethiobiotin synthetase family. In terms of assembly, homodimer. It depends on Mg(2+) as a cofactor.

The protein resides in the cytoplasm. The enzyme catalyses (7R,8S)-7,8-diammoniononanoate + CO2 + ATP = (4R,5S)-dethiobiotin + ADP + phosphate + 3 H(+). Its pathway is cofactor biosynthesis; biotin biosynthesis; biotin from 7,8-diaminononanoate: step 1/2. Functionally, catalyzes a mechanistically unusual reaction, the ATP-dependent insertion of CO2 between the N7 and N8 nitrogen atoms of 7,8-diaminopelargonic acid (DAPA, also called 7,8-diammoniononanoate) to form a ureido ring. The chain is ATP-dependent dethiobiotin synthetase BioD 2 from Salmonella typhimurium (strain LT2 / SGSC1412 / ATCC 700720).